The primary structure comprises 1019 residues: Photoactivated adenylate cyclase subunit alpha-like protein FB (1019 aa).

Residues 55–148 enclose the BLUF 1 domain; the sequence is LRRLMYLSAS…GRLYGEWHMK (94 aa). In terms of domain architecture, Guanylate cyclase 1 spans 204 to 332; sequence VVTFIYLVEF…DCINTASRIT (129 aa). Residues 467–559 enclose the BLUF 2 domain; sequence LITLTYISQA…REYGSPLDMT (93 aa). Residues 615-744 enclose the Guanylate cyclase 2 domain; sequence VLLATDICSF…EVSARVMEVV (130 aa). Low complexity predominate over residues 825–839; sequence APGRGAPAGGIPSSP. A disordered region spans residues 825-862; it reads APGRGAPAGGIPSSPKVRPPGRTNSVSSYTPDPNEALD. Residues 846 to 855 are compositionally biased toward polar residues; that stretch reads RTNSVSSYTP.

It belongs to the adenylyl cyclase class-4/guanylyl cyclase family. Heterotetramer of two alpha and two beta subunits.

Its subcellular location is the cell projection. It is found in the cilium. The protein localises to the flagellum. This chain is Photoactivated adenylate cyclase subunit alpha-like protein FB, found in Euglena gracilis.